Here is a 274-residue protein sequence, read N- to C-terminus: MSVQSTIRRKTAPDIRARKGGDPIVMLTSYHAHTASLVDRYCDAILVGDSLGNVMHGFETTVPVTLEMMILQGHAVMRGSQHALVVVDMPFGSYEASKEQAFHSAARILKETHCGAVKLEGGVRMAETIRFLTERGIPVMGHIGLTPQSINTLGSFRAQGREEGSWEPIEADAKAVAEAGAFSVVVEAVAEPLGRKITETIAIPTIGIGASAACDGQVLVLEDMLGLSPKPPKFVKRYGDLGPGIEAAIKGYAEEVRSRAFPGPEHVYGMKSKA.

Mg(2+)-binding residues include Asp49 and Asp88. Residues 49 to 50 (DS), Asp88, and Lys118 contribute to the 3-methyl-2-oxobutanoate site. Glu120 is a Mg(2+) binding site. The active-site Proton acceptor is Glu187.

Belongs to the PanB family. In terms of assembly, homodecamer; pentamer of dimers. Mg(2+) is required as a cofactor.

It localises to the cytoplasm. It catalyses the reaction 3-methyl-2-oxobutanoate + (6R)-5,10-methylene-5,6,7,8-tetrahydrofolate + H2O = 2-dehydropantoate + (6S)-5,6,7,8-tetrahydrofolate. Its pathway is cofactor biosynthesis; (R)-pantothenate biosynthesis; (R)-pantoate from 3-methyl-2-oxobutanoate: step 1/2. Its function is as follows. Catalyzes the reversible reaction in which hydroxymethyl group from 5,10-methylenetetrahydrofolate is transferred onto alpha-ketoisovalerate to form ketopantoate. The protein is 3-methyl-2-oxobutanoate hydroxymethyltransferase of Rhodopseudomonas palustris (strain TIE-1).